Here is a 448-residue protein sequence, read N- to C-terminus: Phosphoglucosamine mutase (448 aa).

Serine 104 acts as the Phosphoserine intermediate in catalysis. Mg(2+)-binding residues include serine 104, aspartate 241, aspartate 243, and aspartate 245. Serine 104 is modified (phosphoserine).

The protein belongs to the phosphohexose mutase family. Requires Mg(2+) as cofactor. Post-translationally, activated by phosphorylation.

The enzyme catalyses alpha-D-glucosamine 1-phosphate = D-glucosamine 6-phosphate. Its function is as follows. Catalyzes the conversion of glucosamine-6-phosphate to glucosamine-1-phosphate. This is Phosphoglucosamine mutase from Nocardioides sp. (strain ATCC BAA-499 / JS614).